Consider the following 737-residue polypeptide: Glycogen [starch] synthase, muscle (737 aa).

The residue at position 8 (serine 8) is a Phosphoserine; by AMPK and PKA. Serine 11 carries the phosphoserine modification. A UDP-binding site is contributed by lysine 39. UDP-alpha-D-glucose is bound by residues histidine 205 and arginine 211. Residues histidine 291, glutamate 292, glutamine 294, histidine 297, and lysine 301 each coordinate alpha-D-glucose 6-phosphate. Arginine 331 provides a ligand contact to UDP. Arginine 331 contributes to the UDP-alpha-D-glucose binding site. Serine 412 carries the post-translational modification Phosphoserine. Histidine 501 lines the alpha-D-glucose 6-phosphate pocket. The UDP-alpha-D-glucose site is built by glutamate 510, tryptophan 512, and glycine 513. Residue threonine 515 participates in UDP binding. Residues arginine 582 and arginine 586 each coordinate alpha-D-glucose 6-phosphate. Residues 634 to 737 (YRYPRPASVP…PTSSLGEERN (104 aa)) form a disordered region. The residue at position 641 (serine 641) is a Phosphoserine; by DYRK2, GSK3-alpha, GSK3-beta and PASK. Residues serine 645 and serine 649 each carry the phosphoserine; by GSK3-alpha and GSK3-beta modification. Serine 652 is modified (phosphoserine). Residue serine 653 is modified to Phosphoserine; by GSK3-alpha and GSK3-beta. A Phosphoserine; by CK2 modification is found at serine 657. A compositionally biased stretch (acidic residues) spans 658-681 (EDEEDPRNGPLEEDSERYDEDEEA). Serine 672 is subject to Phosphoserine. Residues 682–695 (AKDRRNIRAPEWPR) show a composition bias toward basic and acidic residues. The residue at position 698 (serine 698) is a Phosphoserine. Residues 698-714 (SCTSSTSGSKRNSVDTA) show a composition bias toward polar residues. Position 700 is a phosphothreonine (threonine 700). The residue at position 710 (serine 710) is a Phosphoserine. Residues 715–737 (TSSSLSTPSEPLSPTSSLGEERN) are compositionally biased toward low complexity. Threonine 721 is subject to Phosphothreonine. Phosphoserine is present on residues serine 727 and serine 731.

The protein belongs to the glycosyltransferase 3 family. Part of the GYS1-GYG1 complex, a heterooctamer composed of a tetramer of GYS1 and 2 dimers of GYG1, where each GYS1 protomer binds to one GYG1 subunit (via GYG1 C-terminus); the GYS1 tetramer may dissociate from GYG1 dimers to continue glycogen polymerization on its own. Post-translationally, phosphorylation at Ser-8 by AMPK inactivates the enzyme activity. Primed phosphorylation at Ser-657 (site 5) by CSNK2A1 and CSNK2A2 is required for inhibitory phosphorylation at Ser-641 (site 3a), Ser-645 (site 3b), Ser-649 (site 3c) and Ser-653 (site 4) by GSK3A an GSK3B. Phosphorylated at Ser-641 by PASK, leading to inactivation; phosphorylation by PASK is inhibited by glycogen. Phosphorylated at Ser-641 by DYRK2, leading to inactivation. Dephosphorylation at Ser-641 and Ser-645 by PP1 activates the enzyme.

The enzyme catalyses [(1-&gt;4)-alpha-D-glucosyl](n) + UDP-alpha-D-glucose = [(1-&gt;4)-alpha-D-glucosyl](n+1) + UDP + H(+). It participates in glycan biosynthesis; glycogen biosynthesis. Allosteric activation by glucose-6-phosphate. Phosphorylation reduces the activity towards UDP-glucose. When in the non-phosphorylated state, glycogen synthase does not require glucose-6-phosphate as an allosteric activator; when phosphorylated it does. In terms of biological role, glycogen synthase participates in the glycogen biosynthetic process along with glycogenin and glycogen branching enzyme. Extends the primer composed of a few glucose units formed by glycogenin by adding new glucose units to it. In this context, glycogen synthase transfers the glycosyl residue from UDP-Glc to the non-reducing end of alpha-1,4-glucan. The polypeptide is Glycogen [starch] synthase, muscle (GYS1) (Macaca mulatta (Rhesus macaque)).